The primary structure comprises 793 residues: Signal transducer and activator of transcription 5A (793 aa).

Tyr-90 is modified (phosphotyrosine). Position 128 is a phosphoserine (Ser-128). An SH2 domain is found at Trp-589 to Val-686. 2 positions are modified to phosphotyrosine: Tyr-682 and Tyr-694. Ser-779 bears the Phosphoserine mark.

This sequence belongs to the transcription factor STAT family. In terms of assembly, forms a homodimer or a heterodimer with a related family member. Interacts with NCOA1 and SOCS7. Binds NR3C1. Interacts with ERBB4. Interacts with EBF4. Interacts with CD69. ISGylated. Post-translationally, tyrosine phosphorylated in response to KITLG/SCF, IL2, IL3, IL7, IL15, CSF2/GMCSF, GH1, PRL, EPO and THPO. Activated KIT promotes phosphorylation on tyrosine residues and subsequent translocation to the nucleus. Tyrosine phosphorylated in response to constitutively activated FGFR1, FGFR2, FGFR3 and FGFR4. Tyrosine phosphorylation is required for DNA-binding activity and dimerization. Serine phosphorylation is also required for maximal transcriptional activity. Tyrosine phosphorylated in response to signaling via activated FLT3; wild-type FLT3 results in much weaker phosphorylation than constitutively activated mutant FLT3. Alternatively, can be phosphorylated by JAK2 at Tyr-694. As to expression, in the virgin, found in most tissues except brain and muscle. During lactation, abundantly found in mammary tissue, as well as in other secretory organs such as salivary gland and seminal vesicle.

The protein resides in the cytoplasm. The protein localises to the nucleus. Its function is as follows. Carries out a dual function: signal transduction and activation of transcription. Mediates cellular responses to the cytokine KITLG/SCF and other growth factors. May mediate cellular responses to activated FGFR1, FGFR2, FGFR3 and FGFR4. Binds to the GAS element and activates PRL-induced transcription. Regulates the expression of milk proteins during lactation. This Mus musculus (Mouse) protein is Signal transducer and activator of transcription 5A (Stat5a).